The sequence spans 284 residues: Diaminopimelate epimerase (284 aa).

Positions 14 and 67 each coordinate substrate. The active-site Proton donor is the Cys-76. Substrate is bound by residues 77–78, Asn-166, Asn-199, and 217–218; these read GN and ER. Cys-226 (proton acceptor) is an active-site residue. 227–228 provides a ligand contact to substrate; that stretch reads GT.

The protein belongs to the diaminopimelate epimerase family. In terms of assembly, homodimer.

It is found in the cytoplasm. It catalyses the reaction (2S,6S)-2,6-diaminopimelate = meso-2,6-diaminopimelate. The protein operates within amino-acid biosynthesis; L-lysine biosynthesis via DAP pathway; DL-2,6-diaminopimelate from LL-2,6-diaminopimelate: step 1/1. In terms of biological role, catalyzes the stereoinversion of LL-2,6-diaminopimelate (L,L-DAP) to meso-diaminopimelate (meso-DAP), a precursor of L-lysine and an essential component of the bacterial peptidoglycan. This Bacillus pumilus (strain SAFR-032) protein is Diaminopimelate epimerase.